Reading from the N-terminus, the 934-residue chain is Serine/threonine-protein kinase PknD (934 aa).

One can recognise a Protein kinase domain in the interval 4 to 296 (YELIRLIGKG…ELRQALQPYL (293 aa)). ATP-binding positions include 10–18 (IGKGGMGEV) and Lys33. Residue Asp138 is the Proton acceptor of the active site.

Belongs to the protein kinase superfamily. Ser/Thr protein kinase family. In terms of assembly, interacts with Pkn1. Autophosphorylated on serine and threonine residues. Present in elementary bodies 40 hours post-infection as 2 bands of approximately 55 to 60 and 45 to 50 kDa, which may be due to differential phosphorylation as well as degradation; an enzymatically active full-length protein can also be detected.

The catalysed reaction is L-seryl-[protein] + ATP = O-phospho-L-seryl-[protein] + ADP + H(+). It carries out the reaction L-threonyl-[protein] + ATP = O-phospho-L-threonyl-[protein] + ADP + H(+). In terms of biological role, together with the serine/threonine kinase Pkn1, may play a role in the specific interactions with host proteins during intracellular growth. Autophosphorylates and also phosphorylates Pkn1. The polypeptide is Serine/threonine-protein kinase PknD (Chlamydia trachomatis serovar L2 (strain ATCC VR-902B / DSM 19102 / 434/Bu)).